We begin with the raw amino-acid sequence, 267 residues long: Undecaprenyl-diphosphatase (267 aa).

A run of 8 helical transmembrane segments spans residues 1-21, 39-59, 83-103, 111-131, 149-169, 189-209, 218-238, and 246-266; these read MTYF…FLPI, QGLA…VIYF, SNLA…GLLF, LRSA…LWWV, ALFL…RSGI, FLMS…KLAM, LLST…HFFL, and MMPF…WLAL.

The protein belongs to the UppP family.

The protein resides in the cell inner membrane. It carries out the reaction di-trans,octa-cis-undecaprenyl diphosphate + H2O = di-trans,octa-cis-undecaprenyl phosphate + phosphate + H(+). Catalyzes the dephosphorylation of undecaprenyl diphosphate (UPP). Confers resistance to bacitracin. This Aliivibrio fischeri (strain MJ11) (Vibrio fischeri) protein is Undecaprenyl-diphosphatase.